We begin with the raw amino-acid sequence, 263 residues long: Phosphatidylglycerol--prolipoprotein diacylglyceryl transferase (263 aa).

The next 4 helical transmembrane spans lie at 10-30 (VAIT…LFGF), 56-76 (MVTY…ILFY), 91-111 (IWNG…AMWL), and 117-137 (GLGF…GLFF). Arginine 139 serves as a coordination point for a 1,2-diacyl-sn-glycero-3-phospho-(1'-sn-glycerol). The next 3 helical transmembrane spans lie at 171–191 (PSQL…LWVF), 199–219 (GHVS…VEFV), and 231–251 (FGWL…GLWL).

Belongs to the Lgt family.

The protein resides in the cell inner membrane. The enzyme catalyses L-cysteinyl-[prolipoprotein] + a 1,2-diacyl-sn-glycero-3-phospho-(1'-sn-glycerol) = an S-1,2-diacyl-sn-glyceryl-L-cysteinyl-[prolipoprotein] + sn-glycerol 1-phosphate + H(+). The protein operates within protein modification; lipoprotein biosynthesis (diacylglyceryl transfer). Catalyzes the transfer of the diacylglyceryl group from phosphatidylglycerol to the sulfhydryl group of the N-terminal cysteine of a prolipoprotein, the first step in the formation of mature lipoproteins. This chain is Phosphatidylglycerol--prolipoprotein diacylglyceryl transferase, found in Nitratidesulfovibrio vulgaris (strain DP4) (Desulfovibrio vulgaris).